The sequence spans 189 residues: Interferon alpha-17 (189 aa).

The first 23 residues, 1-23, serve as a signal peptide directing secretion; it reads MALSFSLLMAVLVLSYKSICSLG. 2 disulfides stabilise this stretch: cysteine 24/cysteine 122 and cysteine 52/cysteine 162.

It belongs to the alpha/beta interferon family.

Its subcellular location is the secreted. In terms of biological role, produced by macrophages, IFN-alpha have antiviral activities. Interferon stimulates the production of two enzymes: a protein kinase and an oligoadenylate synthetase. This chain is Interferon alpha-17 (IFNA17), found in Homo sapiens (Human).